Here is a 372-residue protein sequence, read N- to C-terminus: Tomoregulin-1 (372 aa).

A signal peptide spans 1–36; that stretch reads MGAQAPLRLPAAPPLAVCGYTSVLLLFAFCLPGSRA. The Extracellular segment spans residues 37–322; it reads SNQPAGGGGD…VPSRQKLTHV (286 aa). N55 carries an N-linked (GlcNAc...) asparagine glycan. In terms of domain architecture, Kazal-like 1 spans 90–137; sequence ACQFQCHTNYIPVCGSNGDTYQNECFLRRAACKHQKDITVVARGPCYS. 3 cysteine pairs are disulfide-bonded: C91–C121, C95–C114, and C103–C135. The N-linked (GlcNAc...) asparagine glycan is linked to N139. The segment at 139-161 is disordered; it reads NGSGSGEGEEEGSGAGAHRKHSK. The Kazal-like 2 domain maps to 181-229; sequence VCNIDCSGYSFNPVCASDGSSYNNPCFVREASCIKQEQIDIRHLGHCTD. Cystine bridges form between C182/C213, C186/C206, C195/C227, C267/C280, C275/C291, and C293/C302. An EGF-like domain is found at 263-303; sequence SHMPCPENLNGYCIHGKCEFIYSTQKASCRCESGYTGQHCE. A helical membrane pass occupies residues 323-343; sequence LIAAIIGAVQIAIIVAIVMCI. Topologically, residues 344–372 are cytoplasmic; it reads TRKCPKNNRGRRQKQNLGHFTSDTSSRMV. The disordered stretch occupies residues 351-372; sequence NRGRRQKQNLGHFTSDTSSRMV. Polar residues predominate over residues 358-372; sequence QNLGHFTSDTSSRMV.

The protein belongs to the tomoregulin family. May interact with ST14. Maily expressed in neurons. Expressed in brain, neurointermediate lobe, pars distalis, pancreas, ovary and testis.

It localises to the cell membrane. Functionally, neuron-specific restriction factor that prevents herpes simplex virus 1 (HHV-1) infection in the brain by blocking viral entry. Also able to restrict herpes simplex virus 2 (HHV-2) infection, although to a lesser extent. Acts by preventing the association between the viral glycoprotein D (gD) and its cell surface receptor NECTIN1, thereby inhibiting fusion of the virus and the cell membrane. Also able to prevent the association between the viral glycoprotein B (gB) and MYH9/NMMHC-IIA and MYH10/NMMHC-IIB receptors. This is Tomoregulin-1 from Mus musculus (Mouse).